The chain runs to 240 residues: Homeobox protein goosecoid (240 aa).

The segment at residues Lys146–Lys205 is a DNA-binding region (homeobox). Residues Ala199–Ser240 form a disordered region. Positions Thr225 to Ser240 are enriched in basic and acidic residues.

It belongs to the paired homeobox family. Bicoid subfamily.

It is found in the nucleus. The sequence is that of Homeobox protein goosecoid (gsc) from Danio rerio (Zebrafish).